The following is a 633-amino-acid chain: Polypeptide N-acetylgalactosaminyltransferase 3 (633 aa).

The Cytoplasmic portion of the chain corresponds to 1 to 19 (MAHLKRLVKLHIKRHYHKK). A helical; Signal-anchor for type II membrane protein membrane pass occupies residues 20 to 37 (FWKLGAVIFFFIIVLVLM). Over 38 to 633 (QREVSVQYSK…LQKWILSQND (596 aa)) the chain is Lumenal. N132 is a glycosylation site (N-linked (GlcNAc...) asparagine). Positions 184 to 293 (LPTTSVIIVF…YGWLEPLLAR (110 aa)) are catalytic subdomain A. 2 residues coordinate Mn(2+): D277 and H279. N297 is a glycosylation site (N-linked (GlcNAc...) asparagine). The catalytic subdomain B stretch occupies residues 356–418 (PIKTPTFAGG…PCSVVGHVFR (63 aa)). H415 lines the Mn(2+) pocket. An N-linked (GlcNAc...) asparagine glycan is attached at N484. In terms of domain architecture, Ricin B-type lectin spans 504-630 (VISGYIKSVG…SDPLQKWILS (127 aa)). C517 and C535 are oxidised to a cystine. The UDP-N-acetyl-alpha-D-galactosamine site is built by D519, E522, H536, and N541. 2 disulfides stabilise this stretch: C561/C574 and C605/C618.

It belongs to the glycosyltransferase 2 family. GalNAc-T subfamily. Requires Mn(2+) as cofactor. As to expression, expressed in organs that contain secretory epithelial glands. Highly expressed in pancreas, skin, kidney and testis. Weakly expressed in prostate, ovary, intestine and colon. Also expressed in placenta and lung and fetal lung and fetal kidney.

Its subcellular location is the golgi apparatus. It is found in the golgi stack membrane. The catalysed reaction is L-seryl-[protein] + UDP-N-acetyl-alpha-D-galactosamine = a 3-O-[N-acetyl-alpha-D-galactosaminyl]-L-seryl-[protein] + UDP + H(+). It carries out the reaction L-threonyl-[protein] + UDP-N-acetyl-alpha-D-galactosamine = a 3-O-[N-acetyl-alpha-D-galactosaminyl]-L-threonyl-[protein] + UDP + H(+). Its pathway is protein modification; protein glycosylation. Functionally, catalyzes the initial reaction in O-linked oligosaccharide biosynthesis, the transfer of an N-acetyl-D-galactosamine residue to a serine or threonine residue on the protein receptor. Has activity toward HIV envelope glycoprotein gp120, EA2, MUC2, MUC1A and MUC5AC. Probably glycosylates fibronectin in vivo. Glycosylates FGF23. The protein is Polypeptide N-acetylgalactosaminyltransferase 3 (GALNT3) of Homo sapiens (Human).